The sequence spans 417 residues: DNA primase DnaG (417 aa).

Residues 171–257 form the Toprim domain; that stretch reads DAIIIVEGRA…SVEDMARKEI (87 aa). Mg(2+) contacts are provided by Glu-177, Asp-219, and Asp-221. Residues 278–325 form a disordered region; the sequence is VPGEKRTQDLRPQKPGASEQNSIKKENVENENESTPTSFEPISEPAPP. The segment covering 279 to 289 has biased composition (basic and acidic residues); sequence PGEKRTQDLRP.

The protein belongs to the archaeal DnaG primase family. In terms of assembly, forms a ternary complex with MCM helicase and DNA. Requires Mg(2+) as cofactor.

The catalysed reaction is ssDNA + n NTP = ssDNA/pppN(pN)n-1 hybrid + (n-1) diphosphate.. Functionally, RNA polymerase that catalyzes the synthesis of short RNA molecules used as primers for DNA polymerase during DNA replication. The sequence is that of DNA primase DnaG from Methanosphaerula palustris (strain ATCC BAA-1556 / DSM 19958 / E1-9c).